The primary structure comprises 105 residues: Small ribosomal subunit protein uS10 (105 aa).

Belongs to the universal ribosomal protein uS10 family. In terms of assembly, part of the 30S ribosomal subunit.

Functionally, involved in the binding of tRNA to the ribosomes. This chain is Small ribosomal subunit protein uS10, found in Acidobacterium capsulatum (strain ATCC 51196 / DSM 11244 / BCRC 80197 / JCM 7670 / NBRC 15755 / NCIMB 13165 / 161).